Consider the following 183-residue polypeptide: Phosphopantetheine adenylyltransferase (183 aa).

Residue Thr13 participates in substrate binding. ATP contacts are provided by residues 13 to 14 (TF) and His21. Substrate is bound by residues Lys45, Leu81, and Arg95. Residues 96 to 98 (GLR), Glu106, and 131 to 137 (HQFISSR) each bind ATP.

Belongs to the bacterial CoaD family. As to quaternary structure, homohexamer. The cofactor is Mg(2+).

Its subcellular location is the cytoplasm. The enzyme catalyses (R)-4'-phosphopantetheine + ATP + H(+) = 3'-dephospho-CoA + diphosphate. It participates in cofactor biosynthesis; coenzyme A biosynthesis; CoA from (R)-pantothenate: step 4/5. Its function is as follows. Reversibly transfers an adenylyl group from ATP to 4'-phosphopantetheine, yielding dephospho-CoA (dPCoA) and pyrophosphate. The polypeptide is Phosphopantetheine adenylyltransferase (Rhodospirillum centenum (strain ATCC 51521 / SW)).